Reading from the N-terminus, the 101-residue chain is uncharacterized protein (101 aa).

This is an uncharacterized protein from Saccharolobus islandicus (Sulfolobus islandicus).